The primary structure comprises 198 residues: Armadillo repeat-containing protein 7 (198 aa).

2 ARM repeats span residues 57–99 (QVLD…QAGG) and 100–140 (LPLI…TSLP). A Phosphoserine modification is found at Ser-169.

In terms of assembly, component of the minor spliceosome. Within this complex, interacts with RBM48.

Functionally, as a component of the minor spliceosome, involved in the splicing of U12-type introns in pre-mRNAs. This chain is Armadillo repeat-containing protein 7 (Armc7), found in Mus musculus (Mouse).